We begin with the raw amino-acid sequence, 339 residues long: DNA-directed RNA polymerase subunit alpha (339 aa).

The segment at 1–235 (MVIQKNWQEL…DQLQVFVNFE (235 aa)) is alpha N-terminal domain (alpha-NTD). An alpha C-terminal domain (alpha-CTD) region spans residues 251 to 339 (FNPALLKKVD…DLAKRFEEHY (89 aa)).

It belongs to the RNA polymerase alpha chain family. Homodimer. The RNAP catalytic core consists of 2 alpha, 1 beta, 1 beta' and 1 omega subunit. When a sigma factor is associated with the core the holoenzyme is formed, which can initiate transcription.

It catalyses the reaction RNA(n) + a ribonucleoside 5'-triphosphate = RNA(n+1) + diphosphate. DNA-dependent RNA polymerase catalyzes the transcription of DNA into RNA using the four ribonucleoside triphosphates as substrates. This Methylorubrum extorquens (strain CM4 / NCIMB 13688) (Methylobacterium extorquens) protein is DNA-directed RNA polymerase subunit alpha.